Reading from the N-terminus, the 1002-residue chain is Ephrin type-B receptor 5 (1002 aa).

Positions 1-29 (MDSNADISARRVSGMDWLWLVCFFHLVTS) are cleaved as a signal peptide. Topologically, residues 30-564 (LEEILLDTTG…AQDRLPLIVG (535 aa)) are extracellular. Residues 31-213 (EEILLDTTGE…FFYKCPAVVK (183 aa)) enclose the Eph LBD domain. Fibronectin type-III domains follow at residues 344–452 (APRD…TSQS) and 453–548 (VPSA…TLMA). A glycan (N-linked (GlcNAc...) asparagine) is linked at asparagine 446. A helical membrane pass occupies residues 565–585 (SALGGLAFLVIAAIAILAIIF). The Cytoplasmic portion of the chain corresponds to 586 to 1002 (KSKRRETPYT…HLNQLEPVEV (417 aa)). A Protein kinase domain is found at 637 to 900 (IKIEEVIGSG…QIVSALDKMI (264 aa)). Residues 643-651 (IGSGEFGEV) and lysine 669 each bind ATP. The active-site Proton acceptor is the aspartate 762. The disordered stretch occupies residues 906 to 928 (LKATGTGSSRPSQPLLSNSPPDF). Residues 910 to 928 (GTGSSRPSQPLLSNSPPDF) show a composition bias toward polar residues. Residues 929–993 (PSLSNAHEWL…LNSIQLMKVH (65 aa)) form the SAM domain. The PDZ-binding motif lies at 1000–1002 (VEV).

Belongs to the protein kinase superfamily. Tyr protein kinase family. Ephrin receptor subfamily. As to expression, most abundant in thymus and detectable in brain, retina, kidney, lung and heart. Not detected in skeletal muscle and liver.

The protein resides in the membrane. The catalysed reaction is L-tyrosyl-[protein] + ATP = O-phospho-L-tyrosyl-[protein] + ADP + H(+). In terms of biological role, receptor for members of the ephrin-B family. This Gallus gallus (Chicken) protein is Ephrin type-B receptor 5 (EPHB5).